Consider the following 269-residue polypeptide: Hydroxyethylthiazole kinase (269 aa).

Met45 contributes to the substrate binding site. Positions 121 and 167 each coordinate ATP. Residue Gly194 coordinates substrate.

It belongs to the Thz kinase family. Mg(2+) serves as cofactor.

The enzyme catalyses 5-(2-hydroxyethyl)-4-methylthiazole + ATP = 4-methyl-5-(2-phosphooxyethyl)-thiazole + ADP + H(+). It functions in the pathway cofactor biosynthesis; thiamine diphosphate biosynthesis; 4-methyl-5-(2-phosphoethyl)-thiazole from 5-(2-hydroxyethyl)-4-methylthiazole: step 1/1. In terms of biological role, catalyzes the phosphorylation of the hydroxyl group of 4-methyl-5-beta-hydroxyethylthiazole (THZ). The protein is Hydroxyethylthiazole kinase of Bacillus licheniformis (strain ATCC 14580 / DSM 13 / JCM 2505 / CCUG 7422 / NBRC 12200 / NCIMB 9375 / NCTC 10341 / NRRL NRS-1264 / Gibson 46).